Consider the following 141-residue polypeptide: Hemoglobin subunit alpha-D/D' (141 aa).

Residues 1-141 (MLTADDKKLI…VAAVLAEKYR (141 aa)) enclose the Globin domain. H58 and H87 together coordinate heme b.

It belongs to the globin family. As to quaternary structure, heterotetramer of two alpha-D chains and two beta chains. As to expression, red blood cells.

Functionally, involved in oxygen transport from the lung to the various peripheral tissues. This chain is Hemoglobin subunit alpha-D/D' (HBAD), found in Gyps rueppelli (Rueppell's griffon).